Consider the following 478-residue polypeptide: 5-hydroxytryptamine receptor 3A (478 aa).

A signal peptide spans 1–23; the sequence is MLLWVQQALLALLLPTLLAQGEA. The Extracellular portion of the chain corresponds to 24 to 241; it reads RRSRNTTRPA…MKFYVVIRRR (218 aa). N-linked (GlcNAc...) asparagine glycans are attached at residues Asn-28, Asn-104, Asn-170, and Asn-186. Cys-157 and Cys-171 form a disulfide bridge. The helical transmembrane segment at 242–268 threads the bilayer; it reads PLFYVVSLLLPSIFLMVMDIVGFYLPP. The Cytoplasmic portion of the chain corresponds to 269-273; sequence NSGER. Residues 274–292 traverse the membrane as a helical segment; the sequence is VSFKITLLLGYSVFLIIVS. Over 293 to 302 the chain is Extracellular; sequence DTLPATAIGT. A helical membrane pass occupies residues 303 to 321; the sequence is PLIGVYFVVCMALLVISLA. At 322–455 the chain is on the cytoplasmic side; sequence ETIFIVRLVH…GSVLDKLLFH (134 aa). The disordered stretch occupies residues 389–408; that stretch reads GGPQDFEKSPRDRCSPPPPP. Residues 393-402 are compositionally biased toward basic and acidic residues; that stretch reads DFEKSPRDRC. Positions 414–450 are HA-stretch; determines single-channel conductance in 5-HT3 receptors; that stretch reads AVCGLLQELSSIRQFLEKRDEIREVARDWLRVGSVLD. A helical transmembrane segment spans residues 456-475; that stretch reads IYLLAVLAYSITLVMLWSIW. Topologically, residues 476-478 are extracellular; the sequence is QYA.

The protein belongs to the ligand-gated ion channel (TC 1.A.9) family. 5-hydroxytryptamine receptor (TC 1.A.9.2) subfamily. HTR3A sub-subfamily. As to quaternary structure, forms homopentameric as well as heteropentameric serotonin-activated cation-selective channel complexes with HTR3B or HTR3C or HTR3D or HTR3E. The homomeric complex is functional but exhibits low conductance with modified voltage dependence, and decreased agonist and antagonist affinity. Heteropentameric complexes display properties which resemble that of neuronal serotonin-activated channels in vivo. Interacts with RIC3. In terms of tissue distribution, expressed in cerebral cortex, amygdala, hippocampus, and testis. Detected in monocytes of the spleen and tonsil, in small and large intestine, uterus, prostate, ovary and placenta.

It localises to the postsynaptic cell membrane. The protein localises to the cell membrane. It catalyses the reaction Na(+)(in) = Na(+)(out). The enzyme catalyses K(+)(in) = K(+)(out). It carries out the reaction Ca(2+)(in) = Ca(2+)(out). The catalysed reaction is Mg(2+)(in) = Mg(2+)(out). In terms of biological role, forms serotonin (5-hydroxytryptamine/5-HT3)-activated cation-selective channel complexes, which when activated cause fast, depolarizing responses in neurons. In Homo sapiens (Human), this protein is 5-hydroxytryptamine receptor 3A.